Reading from the N-terminus, the 1379-residue chain is Vascular endothelial growth factor receptor 3 (1379 aa).

The N-terminal stretch at 1-19 is a signal peptide; sequence MKRVCTLPLWLWLGIVSEA. At 20–788 the chain is on the extracellular side; that stretch reads DLVSSYSMTP…EGSDDKTNVE (769 aa). Ig-like C2-type domains lie at 30–136, 160–222, 240–335, 340–421, 430–566, 569–684, and 691–777; these read PTLS…TAVS, KENT…IDNK, DIQL…TDVI, PFIN…KRIS, PRIH…FYVT, PDGF…KYIS, and PRLK…ASVS. 2 disulfide bridges follow: Cys51–Cys120 and Cys167–Cys215. Positions 73-93 are disordered; sequence RRWNSQPQQRPVGAGNPEEDC. N-linked (GlcNAc...) asparagine glycosylation is found at Asn113, Asn175, Asn260, and Asn308. A disulfide bridge links Cys261 with Cys319. Disulfide bonds link Cys453/Cys548, Cys474/Cys500, and Cys592/Cys666. Residues Asn529, Asn541, Asn596, Asn608, Asn655, Asn696, and Asn703 are each glycosylated (N-linked (GlcNAc...) asparagine). Residues Cys712 and Cys761 are joined by a disulfide bond. Asn771 carries N-linked (GlcNAc...) asparagine glycosylation. A helical membrane pass occupies residues 789 to 809; it reads IVILIGTGVIAVFFWILLIII. The Cytoplasmic segment spans residues 810–1379; the sequence is FCNIKRPAHA…LHASFFSEQY (570 aa). The 328-residue stretch at 858 to 1185 folds into the Protein kinase domain; sequence LRLGKVLGHG…DLVEILGNLL (328 aa). Residues 864 to 872 and Lys892 each bind ATP; that span reads LGHGAFGKV. Residue Asp1049 is the Proton acceptor of the active site. Phosphotyrosine; by autocatalysis occurs at positions 1075 and 1080. The disordered stretch occupies residues 1196–1224; it reads YIPLNDSHSSEDDGFSQVPSSAQQNSDEE. 5 positions are modified to phosphotyrosine; by autocatalysis: Tyr1239, Tyr1240, Tyr1274, Tyr1342, and Tyr1346. The tract at residues 1299–1379 is disordered; the sequence is RHRKEGGFSS…LHASFFSEQY (81 aa). Over residues 1332-1343 the composition is skewed to polar residues; that stretch reads YGSQVGGQTFYN.

It belongs to the protein kinase superfamily. Tyr protein kinase family. CSF-1/PDGF receptor subfamily. In terms of assembly, interacts with VEGFC and VEGFD. Monomer in the absence of bound VEGFC or VEGFD. Homodimer in the presence of bound VEGFC or VEGFD. Autophosphorylated on tyrosine residues upon ligand binding. Autophosphorylation occurs in trans, i.e. one subunit of the dimeric receptor phosphorylates tyrosine residues on the other subunit.

The protein localises to the cell membrane. Its subcellular location is the cytoplasm. It is found in the nucleus. It carries out the reaction L-tyrosyl-[protein] + ATP = O-phospho-L-tyrosyl-[protein] + ADP + H(+). With respect to regulation, present in an inactive conformation in the absence of bound ligand. Binding of VEGFC or VEGFD leads to dimerization and activation by autophosphorylation on tyrosine residues. Its function is as follows. Tyrosine-protein kinase that acts as a cell-surface receptor for VEGFC and VEGFD, and plays an essential role in lymphangiogenesis and in the development of the vascular network and the cardiovascular system during embryonic development. Promotes proliferation, survival and migration of endothelial cells, and regulates angiogenic sprouting. Mediates activation of the MAPK1/ERK2, MAPK3/ERK1 signaling pathway, of MAPK8 and the JUN signaling pathway, and of the AKT1 signaling pathway. The chain is Vascular endothelial growth factor receptor 3 (FLT4) from Coturnix coturnix (Common quail).